The following is a 213-amino-acid chain: Calcineurin B-like protein 8 (213 aa).

Glycine 2 is lipidated: N-myristoyl glycine. EF-hand domains lie at 31–66 (EVEA…RNSN), 67–102 (KKNL…FHPE), 104–139 (PLGD…LLNE), and 148–183 (AVEQ…NPAL). Residues aspartate 161, asparagine 163, aspartate 165, lysine 167, and glutamate 172 each contribute to the Ca(2+) site.

The protein belongs to the calcineurin regulatory subunit family. As to quaternary structure, homodimer. As to expression, expressed at low levels in roots, shoots, culms, leaves and young spikelets.

Its subcellular location is the cell membrane. Acts as a calcium sensor. May function as positive regulator of salt stress responses. CBL proteins interact with CIPK serine-threonine protein kinases. Binding of a CBL protein to the regulatory NAF domain of a CIPK protein lead to the activation of the kinase in a calcium-dependent manner. The chain is Calcineurin B-like protein 8 (CBL8) from Oryza sativa subsp. japonica (Rice).